The primary structure comprises 380 residues: Succinate--CoA ligase [ADP-forming] subunit beta 2 (380 aa).

The ATP-grasp domain maps to 9 to 235 (KQIFSKHGIR…YTEADQMERI (227 aa)). Residues lysine 45, 52-54 (GRG), glutamate 91, isoleucine 94, and glutamate 99 contribute to the ATP site. Residues asparagine 191 and aspartate 204 each contribute to the Mg(2+) site. Residues asparagine 255 and 312–314 (GIT) each bind substrate.

The protein belongs to the succinate/malate CoA ligase beta subunit family. In terms of assembly, heterotetramer of two alpha and two beta subunits. Requires Mg(2+) as cofactor.

The catalysed reaction is succinate + ATP + CoA = succinyl-CoA + ADP + phosphate. The enzyme catalyses GTP + succinate + CoA = succinyl-CoA + GDP + phosphate. It functions in the pathway carbohydrate metabolism; tricarboxylic acid cycle; succinate from succinyl-CoA (ligase route): step 1/1. Its function is as follows. Succinyl-CoA synthetase functions in the citric acid cycle (TCA), coupling the hydrolysis of succinyl-CoA to the synthesis of either ATP or GTP and thus represents the only step of substrate-level phosphorylation in the TCA. The beta subunit provides nucleotide specificity of the enzyme and binds the substrate succinate, while the binding sites for coenzyme A and phosphate are found in the alpha subunit. This is Succinate--CoA ligase [ADP-forming] subunit beta 2 from Archaeoglobus fulgidus (strain ATCC 49558 / DSM 4304 / JCM 9628 / NBRC 100126 / VC-16).